The following is a 154-amino-acid chain: MAL-like protein (154 aa).

4 consecutive transmembrane segments (helical) span residues 24–44 (LFLT…FWVW), 61–81 (VLYV…SYLF), 99–119 (GTTG…TIIS), and 131–151 (VAAS…AFSI). Residues 24 to 154 (LFLTIPFAFF…ILHAFSIYYH (131 aa)) form the MARVEL domain.

It belongs to the MAL family.

It localises to the membrane. The sequence is that of MAL-like protein (Mall) from Mus musculus (Mouse).